The sequence spans 111 residues: Prophage-derived-like uncharacterized protein YozM (111 aa).

The signal sequence occupies residues 1–24; that stretch reads MKKRLIGFLVLVPALIMWGITLIE.

This Bacillus subtilis (strain 168) protein is Prophage-derived-like uncharacterized protein YozM (yozM).